A 148-amino-acid polypeptide reads, in one-letter code: Large ribosomal subunit protein bL9 (148 aa).

This sequence belongs to the bacterial ribosomal protein bL9 family.

Its function is as follows. Binds to the 23S rRNA. This is Large ribosomal subunit protein bL9 from Frankia casuarinae (strain DSM 45818 / CECT 9043 / HFP020203 / CcI3).